Here is a 664-residue protein sequence, read N- to C-terminus: Bifunctional 3-dehydroquinate synthase/phosphatase (664 aa).

The interval 1–352 is 3-dehydroquinate synthase; sequence MKKIFDDIYV…KIIDKYKNNF (352 aa). NAD(+) is bound by residues 61 to 66, 95 to 99, 119 to 120, lysine 132, lysine 141, and 159 to 162; these read DGEEYK, GVICD, TS, and FLKT. The Zn(2+) site is built by glutamate 174, histidine 238, and histidine 255. The tract at residues 353-664 is GPPA/PPX; sequence LRASIDIGTN…GAILEGVENK (312 aa).

This sequence in the N-terminal section; belongs to the sugar phosphate cyclases superfamily. Dehydroquinate synthase family. It in the C-terminal section; belongs to the GppA/Ppx family. As to quaternary structure, monomer. The cofactor is NAD(+). Co(2+) serves as cofactor. It depends on Zn(2+) as a cofactor.

The protein resides in the cytoplasm. It catalyses the reaction 7-phospho-2-dehydro-3-deoxy-D-arabino-heptonate = 3-dehydroquinate + phosphate. It functions in the pathway metabolic intermediate biosynthesis; chorismate biosynthesis; chorismate from D-erythrose 4-phosphate and phosphoenolpyruvate: step 2/7. The polypeptide is Bifunctional 3-dehydroquinate synthase/phosphatase (aroB) (Fusobacterium nucleatum subsp. nucleatum (strain ATCC 25586 / DSM 15643 / BCRC 10681 / CIP 101130 / JCM 8532 / KCTC 2640 / LMG 13131 / VPI 4355)).